Consider the following 407-residue polypeptide: Eukaryotic initiation factor 4A-II (407 aa).

The segment at 1–22 (MSGGSADYNREHGGPEGMDPDG) is disordered. A Q motif motif is present at residues 33–61 (DNFDDMNLKESLLRGIYAYGFEKPSAIQQ). The 172-residue stretch at 64-235 (IIPCIKGYDV…KKFMRDPIRI (172 aa)) folds into the Helicase ATP-binding domain. ATP is bound at residue 77-84 (AQSGTGKT). Thr-159 is subject to Phosphothreonine. The short motif at 183–186 (DEAD) is the DEAD box element. The Helicase C-terminal domain maps to 246 to 407 (GIKQFYINVE…EMPMNVADLI (162 aa)).

Belongs to the DEAD box helicase family. eIF4A subfamily. As to quaternary structure, eIF4F is a multi-subunit complex, the composition of which varies with external and internal environmental conditions. It is composed of at least EIF4A, EIF4E and EIF4G1/EIFFG3. Interacts with EIF4E. May interact with NOM1.

The catalysed reaction is ATP + H2O = ADP + phosphate + H(+). In terms of biological role, ATP-dependent RNA helicase which is a subunit of the eIF4F complex involved in cap recognition and is required for mRNA binding to ribosome. In the current model of translation initiation, eIF4A unwinds RNA secondary structures in the 5'-UTR of mRNAs which is necessary to allow efficient binding of the small ribosomal subunit, and subsequent scanning for the initiator codon. In Bos taurus (Bovine), this protein is Eukaryotic initiation factor 4A-II (EIF4A2).